Reading from the N-terminus, the 278-residue chain is Splicing factor YJU2 (278 aa).

Residues Cys-51, Cys-54, Cys-88, and Cys-91 each coordinate Zn(2+). Residues 228 to 278 (HRQRTNKPGNNNDEKRTPLFNPTSTKGKIQKKSSVRTNPLGIVIKRGKSLK) are disordered. Short sequence motifs (nuclear localization signal) lie at residues 242–258 (KRTPLFNPTSTKGKIQK) and 260–278 (SSVRTNPLGIVIKRGKSLK).

This sequence belongs to the CWC16 family. YJU2 subfamily. As to quaternary structure, component of the spliceosome. Present in the activated B complex, the catalytically activated B* complex which catalyzes the branching, the catalytic step 1 C complex catalyzing the exon ligation, and the postcatalytic P complex containing the ligated exons (mRNA) and the excised lariat intron. Interacts (via C-terminus) with CLF1. Interacts (via N-terminus) with SYF1. Interacts with U2 snRNA; this interaction is direct. Identified in the CWC complex (or CEF1-associated complex), a spliceosome sub-complex reminiscent of a late-stage spliceosome composed of the U2, U5 and U6 snRNAs and at least BUD13, BUD31, BRR2, CDC40, CEF1, CLF1, CUS1, CWC2, CWC15, CWC21, CWC22, CWC23, CWC24, CWC25, CWC27, ECM2, HSH155, IST3, ISY1, LEA1, MSL1, NTC20, PRP8, PRP9, PRP11, PRP19, PRP21, PRP22, PRP45, PRP46, SLU7, SMB1, SMD1, SMD2, SMD3, SMX2, SMX3, SNT309, SNU114, SPP2, SYF1, SYF2, RSE1 and YJU2.

The protein resides in the nucleus. Functionally, part of the spliceosome which catalyzes two sequential transesterification reactions, first the excision of the non-coding intron from pre-mRNA and then the ligation of the coding exons to form the mature mRNA. Plays a role (via N-terminus) in stabilizing the structure of the spliceosome catalytic core and docking of the branch helix into the active site, producing 5'-exon and lariat intron-3'-intermediates. Further stabilizes spliceosome conformation for 3'-splice site docking (via C-terminus) promoting exon ligation. The chain is Splicing factor YJU2 from Saccharomyces cerevisiae (strain ATCC 204508 / S288c) (Baker's yeast).